Reading from the N-terminus, the 173-residue chain is 3-hydroxydecanoyl-[acyl-carrier-protein] dehydratase (173 aa).

Histidine 71 is a catalytic residue.

The protein belongs to the thioester dehydratase family. FabA subfamily. In terms of assembly, homodimer.

It is found in the cytoplasm. It catalyses the reaction a (3R)-hydroxyacyl-[ACP] = a (2E)-enoyl-[ACP] + H2O. The catalysed reaction is (3R)-hydroxydecanoyl-[ACP] = (2E)-decenoyl-[ACP] + H2O. It carries out the reaction (2E)-decenoyl-[ACP] = (3Z)-decenoyl-[ACP]. Its pathway is lipid metabolism; fatty acid biosynthesis. In terms of biological role, necessary for the introduction of cis unsaturation into fatty acids. Catalyzes the dehydration of (3R)-3-hydroxydecanoyl-ACP to E-(2)-decenoyl-ACP and then its isomerization to Z-(3)-decenoyl-ACP. Can catalyze the dehydratase reaction for beta-hydroxyacyl-ACPs with saturated chain lengths up to 16:0, being most active on intermediate chain length. This chain is 3-hydroxydecanoyl-[acyl-carrier-protein] dehydratase, found in Bradyrhizobium sp. (strain BTAi1 / ATCC BAA-1182).